A 479-amino-acid chain; its full sequence is 5-hydroxytryptamine receptor 2B (479 aa).

Residues 1–55 (MASSYKMSEQSTISEHILQKTCDHLILTDRSGLKAESAAEEMKQTAENQGNTVHW) are Extracellular-facing. A helical transmembrane segment spans residues 56–78 (AALLIFAVIIPTIGGNILVILAV). Topologically, residues 79–89 (SLEKRLQYATN) are cytoplasmic. A helical transmembrane segment spans residues 90–112 (YFLMSLAVADLLVGLFVMPIALL). The Extracellular portion of the chain corresponds to 113–128 (TIMFEATWPLPLALCP). C127 and C206 are disulfide-bonded. A helical membrane pass occupies residues 129–150 (AWLFLDVLFSTASIMHLCAISL). D134 and T139 together coordinate ergotamine. Positions 151 to 153 (DRY) match the DRY motif; important for ligand-induced conformation changes motif. Over 151-170 (DRYIAIKKPIQANQCNSRTT) the chain is Cytoplasmic. Residues 171–191 (AFVKITVVWLISIGIAIPVPI) traverse the membrane as a helical segment. At 192 to 215 (KGIEADVVNAHNITCELTKDRFGS) the chain is on the extracellular side. N203 carries an N-linked (GlcNAc...) asparagine glycan. L208 is a binding site for ergotamine. A [DE]RFG motif; may stabilize a conformation that preferentially activates signaling via beta-arrestin family members motif is present at residues 211 to 214 (DRFG). The chain crosses the membrane as a helical span at residues 216–238 (FMLFGSLAAFFAPLTIMIVTYFL). Residues 239 to 323 (TIHALRKKAY…TISNEQRASK (85 aa)) lie on the Cytoplasmic side of the membrane. The helical transmembrane segment at 324 to 344 (VLGIVFLFFLLMWCPFFITNV) threads the bilayer. The Extracellular portion of the chain corresponds to 345-359 (TLALCDSCNQTTLKT). A disulfide bridge connects residues C349 and C352. An N-linked (GlcNAc...) asparagine glycan is attached at N353. The chain crosses the membrane as a helical span at residues 360-381 (LLQIFVWVGYVSSGVNPLIYTL). Positions 375-379 (NPLIY) match the NPxxY motif; important for ligand-induced conformation changes and signaling motif. Residues 382–479 (FNKTFREAFG…DKVEDQVSYI (98 aa)) are Cytoplasmic-facing. A lipid anchor (S-palmitoyl cysteine) is attached at C396. A PDZ-binding motif is present at residues 477-479 (SYI).

This sequence belongs to the G-protein coupled receptor 1 family. In terms of assembly, interacts (via C-terminus) with MPDZ. As to expression, stomach fundus.

Its subcellular location is the cell membrane. It is found in the synapse. The protein localises to the synaptosome. In terms of biological role, G-protein coupled receptor for 5-hydroxytryptamine (serotonin). Also functions as a receptor for various ergot alkaloid derivatives and psychoactive substances. Ligand binding causes a conformation change that triggers signaling via guanine nucleotide-binding proteins (G proteins) and modulates the activity of downstream effectors. HTR2B is coupled to G(q)/G(11) G alpha proteins and activates phospholipase C-beta, releasing diacylglycerol (DAG) and inositol 1,4,5-trisphosphate (IP3) second messengers that modulate the activity of phosphatidylinositol 3-kinase and promote the release of Ca(2+) ions from intracellular stores, respectively. Beta-arrestin family members inhibit signaling via G proteins and mediate activation of alternative signaling pathways. Plays a role in the regulation of dopamine and 5-hydroxytryptamine release, 5-hydroxytryptamine uptake and in the regulation of extracellular dopamine and 5-hydroxytryptamine levels, and thereby affects neural activity. May play a role in the perception of pain. Plays a role in the regulation of behavior, including impulsive behavior. Required for normal proliferation of embryonic cardiac myocytes and normal heart development. Protects cardiomyocytes against apoptosis. Plays a role in the adaptation of pulmonary arteries to chronic hypoxia. Plays a role in vasoconstriction. Required for normal osteoblast function and proliferation, and for maintaining normal bone density. Required for normal proliferation of the interstitial cells of Cajal in the intestine. The polypeptide is 5-hydroxytryptamine receptor 2B (Htr2b) (Rattus norvegicus (Rat)).